The following is a 382-amino-acid chain: MSTYTRPVMLLLSGLLLLTLAIAVLNTLVPLWLAQEHMSTWQVGVVSSSYFTGNLVGTLLTGYVIKRIGFNRSYYLASFIFAAGCAGLGLMIGFWSWLAWRFVAGVGCAMIWVVVESALMCSGTSRNRGRLLAAYMMVYYVGTFLGQLLVSKVSTELMSVLPWVTGLTLAGILPLLFTRVLNQQAENHDATSITSMLKLRQARLGVNGCIISGIVLGSLYGLMPLYLNHKGVSNASIGFWMAVLVSAGILGQWPIGRLADKFGRLLVLRVQVFVVILGSIAMLSQAAMAPALFILGAAGFTLYPVAMAWACEKVEHHQLVAMNQALLLSYTVGSLLGPSFTAMLMQNFSDNLLFIMIASVSFIYLLMLLRNAGHTPKPVAHV.

Transmembrane regions (helical) follow at residues 14 to 34 (GLLL…LWLA), 45 to 65 (VVSS…GYVI), 79 to 99 (FIFA…SWLA), 102 to 122 (FVAG…LMCS), 131 to 151 (LLAA…LLVS), 157 to 177 (LMSV…PLLF), 204 to 224 (LGVN…GLMP), 235 to 255 (ASIG…QWPI), 270 to 290 (VQVF…AMAP), 291 to 311 (ALFI…AWAC), 325 to 345 (ALLL…AMLM), and 348 to 368 (FSDN…LLML).

The protein belongs to the major facilitator superfamily. YcaD (TC 2.A.1.26) family.

It localises to the cell inner membrane. This is an uncharacterized protein from Escherichia coli O7:K1 (strain IAI39 / ExPEC).